A 265-amino-acid polypeptide reads, in one-letter code: Serine protease ami (265 aa).

The first 21 residues, 1–21 (MNVSWALLAVVLVLTVATYEC), serve as a signal peptide directing secretion. A glycan (N-linked (GlcNAc...) asparagine) is linked at Asn2. Positions 22-26 (RPRGR) are cleaved as a propeptide — activation peptide. A Peptidase S1 domain is found at 27–254 (ILGGQDSKAE…YKSWIMESMY (228 aa)). Residues Cys52 and Cys68 are joined by a disulfide bond. The active-site Charge relay system is His67. N-linked (GlcNAc...) asparagine glycosylation is found at Asn71, Asn74, and Asn108. The active-site Charge relay system is Asp115. Cystine bridges form between Cys149-Cys215, Cys180-Cys196, and Cys205-Cys230. The active-site Charge relay system is Ser209. Asn255 carries N-linked (GlcNAc...) asparagine glycosylation.

It belongs to the peptidase S1 family.

It is found in the secreted. Its function is as follows. Probable serine protease. This Xenopus tropicalis (Western clawed frog) protein is Serine protease ami.